Reading from the N-terminus, the 575-residue chain is Aspartate--tRNA ligase (575 aa).

An L-aspartate-binding site is contributed by glutamate 169. Positions 193 to 196 (QLFK) are aspartate. L-aspartate is bound at residue arginine 215. Residues 215 to 217 (RDE) and glutamine 224 each bind ATP. Histidine 438 is a binding site for L-aspartate. Glutamate 472 serves as a coordination point for ATP. An L-aspartate-binding site is contributed by arginine 479. ATP is bound at residue 524-527 (GLDR).

Belongs to the class-II aminoacyl-tRNA synthetase family. Type 1 subfamily. Homodimer.

The protein resides in the cytoplasm. The catalysed reaction is tRNA(Asp) + L-aspartate + ATP = L-aspartyl-tRNA(Asp) + AMP + diphosphate. Catalyzes the attachment of L-aspartate to tRNA(Asp) in a two-step reaction: L-aspartate is first activated by ATP to form Asp-AMP and then transferred to the acceptor end of tRNA(Asp). This chain is Aspartate--tRNA ligase, found in Mycoplasma capricolum subsp. capricolum (strain California kid / ATCC 27343 / NCTC 10154).